A 962-amino-acid chain; its full sequence is Glycine dehydrogenase (decarboxylating) (962 aa).

Lys709 carries the post-translational modification N6-(pyridoxal phosphate)lysine.

It belongs to the GcvP family. The glycine cleavage system is composed of four proteins: P, T, L and H. Pyridoxal 5'-phosphate is required as a cofactor.

The enzyme catalyses N(6)-[(R)-lipoyl]-L-lysyl-[glycine-cleavage complex H protein] + glycine + H(+) = N(6)-[(R)-S(8)-aminomethyldihydrolipoyl]-L-lysyl-[glycine-cleavage complex H protein] + CO2. The glycine cleavage system catalyzes the degradation of glycine. The P protein binds the alpha-amino group of glycine through its pyridoxal phosphate cofactor; CO(2) is released and the remaining methylamine moiety is then transferred to the lipoamide cofactor of the H protein. The chain is Glycine dehydrogenase (decarboxylating) from Shewanella sp. (strain ANA-3).